A 383-amino-acid polypeptide reads, in one-letter code: Processive diacylglycerol beta-glucosyltransferase (383 aa).

Belongs to the glycosyltransferase 28 family. UgtP subfamily.

It is found in the cell membrane. The catalysed reaction is a 1,2-diacyl-3-O-(beta-D-glucopyranosyl)-sn-glycerol + UDP-alpha-D-glucose = a 1,2-diacyl-3-O-(beta-D-Glc-(1-&gt;6)-beta-D-Glc)-sn-glycerol + UDP + H(+). The enzyme catalyses a 1,2-diacyl-3-O-(beta-D-Glc-(1-&gt;6)-beta-D-Glc)-sn-glycerol + UDP-alpha-D-glucose = a 1,2-diacyl-3-O-(beta-D-Glc-(1-&gt;6)-beta-D-Glc-(1-&gt;6)-beta-D-Glc)-sn-glycerol + UDP + H(+). It catalyses the reaction a 1,2-diacyl-sn-glycerol + UDP-alpha-D-glucose = a 1,2-diacyl-3-O-(beta-D-glucopyranosyl)-sn-glycerol + UDP + H(+). Its pathway is glycolipid metabolism; diglucosyl-diacylglycerol biosynthesis. Functionally, processive glucosyltransferase involved in the biosynthesis of both the bilayer- and non-bilayer-forming membrane glucolipids. Is able to successively transfer up to three glucosyl residues to diacylglycerol (DAG), thereby catalyzing the formation of beta-monoglucosyl-DAG (3-O-(beta-D-glucopyranosyl)-1,2-diacyl-sn-glycerol), beta-diglucosyl-DAG (3-O-(beta-D-glucopyranosyl-beta-(1-&gt;6)-D-glucopyranosyl)-1,2-diacyl-sn-glycerol) and beta-triglucosyl-DAG (3-O-(beta-D-glucopyranosyl-beta-(1-&gt;6)-D-glucopyranosyl-beta-(1-&gt;6)-D-glucopyranosyl)-1,2-diacyl-sn-glycerol). Beta-diglucosyl-DAG is the predominant glycolipid found in Bacillales and is also used as a membrane anchor for lipoteichoic acid (LTA). The protein is Processive diacylglycerol beta-glucosyltransferase of Bacillus licheniformis (strain ATCC 14580 / DSM 13 / JCM 2505 / CCUG 7422 / NBRC 12200 / NCIMB 9375 / NCTC 10341 / NRRL NRS-1264 / Gibson 46).